We begin with the raw amino-acid sequence, 90 residues long: Small ribosomal subunit protein uS15c (90 aa).

This sequence belongs to the universal ribosomal protein uS15 family. Part of the 30S ribosomal subunit.

Its subcellular location is the plastid. It localises to the chloroplast. The polypeptide is Small ribosomal subunit protein uS15c (rps15-A) (Oryza nivara (Indian wild rice)).